The following is a 990-amino-acid chain: F-box/LRR-repeat protein 15 (990 aa).

Positions 190–236 (FEVHIDLTDDLLHMVFSFLNHVDLCRSAMVCRQWRVASAHEDFWRVL) constitute an F-box domain. LRR repeat units lie at residues 237–258 (NFEN…YPNA), 280–303 (LRNL…ALGE), 317–341 (LGNG…KCRV), 348–373 (CPQL…LLQL), 397–423 (LESL…CANL), 441–465 (LPML…WIAN), 466–477 (SPALEVLELDNC), 478–503 (NLLT…KFTD), 519–542 (CPAL…KQEN), 550–574 (CHSL…IFSD), 589–612 (CESL…GCRA), 614–633 (TSLE…GCDH), 640–652 (QPVA…LGIC), 653–678 (PKLS…VLSE), 734–756 (LPNL…VFKS), 758–782 (IQLK…LYKE), 785–809 (LPAL…LLAC), 813–839 (LTHL…LFDY), 882–893 (FYHLSTLNLSLS), 894–914 (VNLK…LSNC), 915–937 (CSLE…SCNM), and 949–973 (CSSL…KFRT).

The sequence is that of F-box/LRR-repeat protein 15 (FBL15) from Arabidopsis thaliana (Mouse-ear cress).